Here is a 1025-residue protein sequence, read N- to C-terminus: Multidrug resistance protein MdtC (1025 aa).

12 helical membrane passes run 3-23, 333-353, 360-380, 387-407, 431-451, 463-483, 528-548, 853-873, 875-895, 897-917, 953-973, and 984-1004; these read FFAL…AITL, EVEQ…FLFL, IIPA…MYLC, LSLM…IVVL, VGFT…PLLL, FAVT…TLTP, LVGV…ISIP, VILI…LYES, VHPL…LLAL, LFNA…IGIV, PIMM…LSGG, and ITIV…TPVV.

This sequence belongs to the resistance-nodulation-cell division (RND) (TC 2.A.6) family. MdtC subfamily. As to quaternary structure, part of a tripartite efflux system composed of MdtA, MdtB and MdtC. MdtC forms a heteromultimer with MdtB.

It localises to the cell inner membrane. Its function is as follows. The MdtABC tripartite complex confers resistance against novobiocin and deoxycholate. This chain is Multidrug resistance protein MdtC, found in Escherichia coli O1:K1 / APEC.